Reading from the N-terminus, the 303-residue chain is MAATRYEPVAEIGVGAYGTVYKARDPHSGHFVALKSVRVPNGGAAGGGLPVSTVREVALLRRLEAFEHPNVVRLMDVCATSRTDRDIKVTLVFEHIDQDLRTYLDKAPPPGLPVETIKDLMRQFLSGLDFLHANCIVHRDLKPENILVTSNGTVKLADFGLARIYSYQMALTPVVVTLWYRAPEVLLQSTYATPVDMWSVGCIFAEMFRRKPLFCGNSEADQLGKIFDLIGLPPEDDWPREVSLPRGAFAPRGPRPVQSVVPEMEESGAQLLLEMLTFNPHKRISAFRALQHSYLHKEESDAE.

Ala2 carries the N-acetylalanine modification. A Protein kinase domain is found at 6-295 (YEPVAEIGVG…AFRALQHSYL (290 aa)). ATP contacts are provided by residues 12–20 (IGVGAYGTV) and Lys35. Positions 50-56 (PVSTVRE) are required for binding D-type cyclins. Asp140 acts as the Proton acceptor in catalysis. Thr172 carries the phosphothreonine; by CAK modification. Ser300 is modified (phosphoserine).

This sequence belongs to the protein kinase superfamily. CMGC Ser/Thr protein kinase family. CDC2/CDKX subfamily. In terms of assembly, component of the D-CDK4 complex, composed of CDK4 and some D-type G1 cyclin (CCND1, CCND2 or CCND3). Interacts directly in the complex with CCND1, CCND2 or CCND3. Interacts with ZNF655. Forms a ternary complex, cyclin D-CDK4-CDKN1B, involved in modulating CDK4 enzymatic activity. Interacts directly with CDKN1B (phosphorylated on 'Tyr-88' and 'Tyr-89'); the interaction allows assembly of the cyclin D-CDK4 complex, Thr-172 phosphorylation, nuclear translocation and enhances the cyclin D-CDK4 complex activity. CDK4 activity is either inhibited or enhanced depending on stoichiometry of complex. The non-tyrosine-phosphorylated form of CDKN1B prevents T-loop phosphorylation of CDK4 producing inactive CDK4. Interacts (unphosphorylated form) with CDK2. Also forms ternary complexes with CDKN1A or CDKN2A. Interacts directly with CDKN1A (via its N-terminal); the interaction promotes the assembly of the cyclin D-CDK4 complex, its nuclear translocation and promotes the cyclin D-dependent enzyme activity of CDK4. Interacts with CCND1; the interaction is prevented with the binding of CCND1 to INSM1 during cell cycle progression. Interacts with SEI1 and CCND1. Probably forms a complex composed of chaperones HSP90 and HSP70, co-chaperones CDC37, PPP5C, TSC1 and client protein TSC2, CDK4, AKT, RAF1 and NR3C1; this complex does not contain co-chaperones STIP1/HOP and PTGES3/p23. Interacts with CEBPA (when phosphorylated). Interacts with FNIP1 and FNIP2. Post-translationally, phosphorylation at Thr-172 is required for enzymatic activity. Phosphorylated, in vitro, at this site by CCNH-CDK7, but, in vivo, appears to be phosphorylated by a proline-directed kinase. In the cyclin D-CDK4-CDKN1B complex, this phosphorylation and consequent CDK4 enzyme activity, is dependent on the tyrosine phosphorylation state of CDKN1B. Thus, in proliferating cells, CDK4 within the complex is phosphorylated on Thr-172 in the T-loop. In resting cells, phosphorylation on Thr-172 is prevented by the non-tyrosine-phosphorylated form of CDKN1B.

Its subcellular location is the cytoplasm. The protein resides in the nucleus. It localises to the nucleus membrane. The enzyme catalyses L-seryl-[protein] + ATP = O-phospho-L-seryl-[protein] + ADP + H(+). The catalysed reaction is L-threonyl-[protein] + ATP = O-phospho-L-threonyl-[protein] + ADP + H(+). Its activity is regulated as follows. Both phosphorylation at Thr-172 and binding of a D-type cyclin are necessary for enzymatic activity. Full activation of the cyclin-D-CDK4 complex appears to require other factors such as recruitment of the substrate via a substrate recruitment motif, and/or formation of the CDKN1B ternary complex. Inhibited by INK4 family members. In resting cells, the non-tyrosine-phosphorylated form of CDKN1B prevents phosphorylation at Thr-172 and inactivation, while, in proliferating cells, tyrosine phosphorylation of CDKN1B allows phosphorylation of Thr-172 of CDK4 and subsequent activation. Its function is as follows. Ser/Thr-kinase component of cyclin D-CDK4 (DC) complexes that phosphorylate and inhibit members of the retinoblastoma (RB) protein family including RB1 and regulate the cell-cycle during G(1)/S transition. Phosphorylation of RB1 allows dissociation of the transcription factor E2F from the RB/E2F complexes and the subsequent transcription of E2F target genes which are responsible for the progression through the G(1) phase. Hypophosphorylates RB1 in early G(1) phase. Cyclin D-CDK4 complexes are major integrators of various mitogenenic and antimitogenic signals. Also phosphorylates SMAD3 in a cell-cycle-dependent manner and represses its transcriptional activity. Component of the ternary complex, cyclin D/CDK4/CDKN1B, required for nuclear translocation and activity of the cyclin D-CDK4 complex. This chain is Cyclin-dependent kinase 4 (Cdk4), found in Mus musculus (Mouse).